A 91-amino-acid chain; its full sequence is Early E3B 10.4 kDa protein (91 aa).

An N-terminal signal peptide occupies residues 1–22; sequence MIPRVLILLTLVALFCACSTLA. The Lumenal segment spans residues 23–34; that stretch reads AVAHIEVDCIPP. The chain crosses the membrane as a helical span at residues 35-60; sequence FTVYLLYGFVTLILICSLVTVVIAFI. The Cytoplasmic portion of the chain corresponds to 61 to 91; the sequence is QFIDWICVRIAYLRHHPQYRDRTIADLLRIL.

The protein belongs to the adenoviridae E3B family.

Its subcellular location is the host endoplasmic reticulum membrane. Down-regulates the EGF receptor. The chain is Early E3B 10.4 kDa protein from Homo sapiens (Human).